A 627-amino-acid polypeptide reads, in one-letter code: MSVISILPLASKSCLYKSLMSSTHELKALCRPIATLGMCRRGKSVMASKSTSLTTAVSDDGVQRRIGDHHSNLWDDNFIQSLSSPYGASSYGERAERLIGEVKEIFNSLSRTDGELVSHVDDLLQHLSMVDNVERLGIDRHFQTEIKVSLDYVYSYWSEKGIGSGRDIVCTDLNTTALGFRILRLHGYTVFPDVFEHFKDQMGRIACSDNHTERQISSILNLFRASLIAFPGEKVMEEAEIFSATYLKEALQTIPVSSLSQEIQYVLQYRWHSNLPRLEARTYIDILQENTKNQMLDVNTKKVLELAKLEFNIFHSLQQNELKSVSRWWKESGFPDLNFIRHRHVEFYTLVSGIDMEPKHCTFRLSFVKMCHLITVLDDMYDTFGTIDELRLFTAAVKRWDPSTTECLPEYMKGVYTVLYETVNEMAQEAQKSQGRDTLSYVRQALEAYIGAYHKEAEWISSGYLPTFDEYFENGKVSSGHRIATLQPTFMLDIPFPHHVLQEIDFPSKFNDFACSILRLRGDTRCYQADRARGEEASCISCYMKDNPGSTQEDALNHINNMIEETIKKLNWELLKPDNNVPISSKKHAFDINRGLHHFYNYRDGYTVASNETKNLVIKTVLEPVPM.

The transit peptide at 1–36 directs the protein to the chloroplast; the sequence is MSVISILPLASKSCLYKSLMSSTHELKALCRPIATL. Residues D378, D382, and D530 each contribute to the Mg(2+) site. A DDXXD motif motif is present at residues 378 to 382; it reads DDMYD.

The protein belongs to the terpene synthase family. Tpsd subfamily. Mg(2+) serves as cofactor. The cofactor is Mn(2+).

It localises to the plastid. Its subcellular location is the chloroplast. The catalysed reaction is (2E)-geranyl diphosphate = (+)-car-3-ene + diphosphate. It functions in the pathway terpene metabolism; oleoresin biosynthesis. Terpene synthase (TPS) involved in defensive oleoresin formation in conifers in response to insect attack or other injury. This chain is Carene synthase, chloroplastic (JF67), found in Picea abies (Norway spruce).